Reading from the N-terminus, the 259-residue chain is Pycsar effector protein RsmPycTIR (259 aa).

1 to 120 (MVGGDEVIAN…RRVHEDFSGR (120 aa)) serves as a coordination point for a nucleoside 3',5'-cyclic phosphate. The segment at 126-229 (LATGISRRTS…AEFQYQISSS (104 aa)) is TIR-like. Transmembrane regions (helical) follow at residues 136-156 (GWNW…AIWY), 169-189 (VLLP…ADPV), and 234-254 (QATA…LFWI).

It localises to the cell inner membrane. The catalysed reaction is NAD(+) + H2O = ADP-D-ribose + nicotinamide + H(+). Pycsar (pyrimidine cyclase system for antiphage resistance) provides immunity against bacteriophage. The pyrimidine cyclase (PycC) synthesizes cyclic nucleotides in response to infection; these serve as specific second messenger signals. The signals activate the adjacent effector, leading to bacterial cell death and abortive phage infection. A clade B Pycsar system. Functionally, the effector gene of a two-gene Pycsar system. Expression of this and adjacent uridylate cyclase RsmPycC (AC A0A1V0HUX5) probably confers resistance to bacteriophage. The genes are probably only expressed in response to bacteriophage infection. Probably only responds to cUMP (produced by its cognate NTP cyclase), it may act by degrading NAD(+) and/or by impairing membrane integrity. The chain is Pycsar effector protein RsmPycTIR from Rhodovulum sp. (strain MB263).